We begin with the raw amino-acid sequence, 491 residues long: 2,3-bisphosphoglycerate-independent phosphoglycerate mutase (491 aa).

Residues D11 and S61 each coordinate Mn(2+). The active-site Phosphoserine intermediate is S61. Substrate contacts are provided by residues H118, 147-148 (RD), R177, R183, 247-250 (RNDR), and K320. Mn(2+) is bound by residues D386, H390, D427, H428, and H445.

The protein belongs to the BPG-independent phosphoglycerate mutase family. In terms of assembly, monomer. Mn(2+) serves as cofactor.

The enzyme catalyses (2R)-2-phosphoglycerate = (2R)-3-phosphoglycerate. Its pathway is carbohydrate degradation; glycolysis; pyruvate from D-glyceraldehyde 3-phosphate: step 3/5. Its function is as follows. Catalyzes the interconversion of 2-phosphoglycerate and 3-phosphoglycerate. In Helicobacter pylori (strain ATCC 700392 / 26695) (Campylobacter pylori), this protein is 2,3-bisphosphoglycerate-independent phosphoglycerate mutase.